A 141-amino-acid chain; its full sequence is Large ribosomal subunit protein uL11 (141 aa).

It belongs to the universal ribosomal protein uL11 family. Part of the ribosomal stalk of the 50S ribosomal subunit. Interacts with L10 and the large rRNA to form the base of the stalk. L10 forms an elongated spine to which L12 dimers bind in a sequential fashion forming a multimeric L10(L12)X complex. One or more lysine residues are methylated.

Forms part of the ribosomal stalk which helps the ribosome interact with GTP-bound translation factors. In Campylobacter jejuni subsp. jejuni serotype O:6 (strain 81116 / NCTC 11828), this protein is Large ribosomal subunit protein uL11.